Here is a 275-residue protein sequence, read N- to C-terminus: Dermonecrotic toxin LamSicTox-alphaIV1i (275 aa).

His5 is a catalytic residue. The Mg(2+) site is built by Glu25 and Asp27. The active-site Nucleophile is the His41. Intrachain disulfides connect Cys45–Cys51 and Cys47–Cys192. Asp85 lines the Mg(2+) pocket.

It belongs to the arthropod phospholipase D family. Class II subfamily. Mg(2+) is required as a cofactor. In terms of tissue distribution, expressed by the venom gland.

It localises to the secreted. The enzyme catalyses an N-(acyl)-sphingosylphosphocholine = an N-(acyl)-sphingosyl-1,3-cyclic phosphate + choline. It catalyses the reaction an N-(acyl)-sphingosylphosphoethanolamine = an N-(acyl)-sphingosyl-1,3-cyclic phosphate + ethanolamine. It carries out the reaction a 1-acyl-sn-glycero-3-phosphocholine = a 1-acyl-sn-glycero-2,3-cyclic phosphate + choline. The catalysed reaction is a 1-acyl-sn-glycero-3-phosphoethanolamine = a 1-acyl-sn-glycero-2,3-cyclic phosphate + ethanolamine. Dermonecrotic toxins cleave the phosphodiester linkage between the phosphate and headgroup of certain phospholipids (sphingolipid and lysolipid substrates), forming an alcohol (often choline) and a cyclic phosphate. This toxin acts on sphingomyelin (SM). It may also act on ceramide phosphoethanolamine (CPE), lysophosphatidylcholine (LPC) and lysophosphatidylethanolamine (LPE), but not on lysophosphatidylserine (LPS), and lysophosphatidylglycerol (LPG). It acts by transphosphatidylation, releasing exclusively cyclic phosphate products as second products. Induces dermonecrosis, hemolysis, increased vascular permeability, edema, inflammatory response, and platelet aggregation. The chain is Dermonecrotic toxin LamSicTox-alphaIV1i from Loxosceles amazonica (Recluse spider).